The sequence spans 182 residues: Large ribosomal subunit protein uL10 (182 aa).

This sequence belongs to the universal ribosomal protein uL10 family. Part of the ribosomal stalk of the 50S ribosomal subunit. The N-terminus interacts with L11 and the large rRNA to form the base of the stalk. The C-terminus forms an elongated spine to which L12 dimers bind in a sequential fashion forming a multimeric L10(L12)X complex.

In terms of biological role, forms part of the ribosomal stalk, playing a central role in the interaction of the ribosome with GTP-bound translation factors. In Janthinobacterium sp. (strain Marseille) (Minibacterium massiliensis), this protein is Large ribosomal subunit protein uL10.